The primary structure comprises 191 residues: Cell number regulator 1 (191 aa).

The interval 13–44 (FSAGAPPTAPPPPAAYHQQQQQHGANMDTSRP) is disordered. Over residues 27–37 (AYHQQQQQHGA) the composition is skewed to low complexity. The chain crosses the membrane as a helical span at residues 91–113 (IASGLVYGLICASTGMGCLYSCL).

The protein belongs to the cornifelin family. As to expression, expressed in roots, coleoptiles, stalks and silks. Detected in leaves, apical meristems, immature ears and pericarps. Highest expression in coleoptiles and silks.

The protein localises to the membrane. Acts as a negative regulator of cell number. The sequence is that of Cell number regulator 1 (CNR1) from Zea mays (Maize).